The following is a 348-amino-acid chain: MAMASSAYAPAGGVGTHSAPGRIRPPRGLGFSTTTTKSRPLVLTRRGGGGGNISVARLRCAASSSSAAARPMSQPRFIQHKKEAFWFYRFLSIVYDHVINPGHWTEDMRDDALEPADLYSRKLRVVDVGGGTGFTTLGIVKRVDPENVTLLDQSPHQLEKAREKEALKGVTIMEGDAEDLPFPTDTFDRYVSAGSIEYWPDPQRGIKEAYRVLRLGGVACMIGPVHPTFWLSRFFADMWMLFPKEEEYIEWFKKAGFKDVKLKRIGPKWYRGVRRHGLIMGCSVTGVKREHGDSPLQLGPKVEDVSKPVNPITFLFRFLMGTICAAYYVLVPIYMWIKDQIVPKGMPI.

The disordered stretch occupies residues 1-48 (MAMASSAYAPAGGVGTHSAPGRIRPPRGLGFSTTTTKSRPLVLTRRGG). Residues 1-59 (MAMASSAYAPAGGVGTHSAPGRIRPPRGLGFSTTTTKSRPLVLTRRGGGGGNISVARLR) constitute a chloroplast transit peptide. Residues 60-317 (CAASSSSAAA…PVNPITFLFR (258 aa)) are Chloroplast intermembrane-facing. The tract at residues 125–134 (VVDVGGGTGF) is SAM motif I. The interval 170–183 (VTIMEGDAEDLPFP) is SAM motif II. The segment at 211–224 (RVLRLGGVACMIGP) is SAM motif III. The chain crosses the membrane as a helical span at residues 318 to 338 (FLMGTICAAYYVLVPIYMWIK). The Stromal segment spans residues 339 to 348 (DQIVPKGMPI).

It belongs to the class I-like SAM-binding methyltransferase superfamily. MPBQ/MBSQ MT family.

It localises to the plastid. Its subcellular location is the chloroplast inner membrane. The catalysed reaction is 2-methyl-6-phytyl-1,4-benzene-1,4-diol + S-adenosyl-L-methionine = 2,3-dimethyl-6-phytylbenzene-1,4-diol + S-adenosyl-L-homocysteine + H(+). It catalyses the reaction 2-methyl-6-(all-trans-nonaprenyl)benzene-1,4-diol + S-adenosyl-L-methionine = plastoquinol-9 + S-adenosyl-L-homocysteine + H(+). The enzyme catalyses 6-geranylgeranyl-2-methylbenzene-1,4-diol + S-adenosyl-L-methionine = 6-geranylgeranyl-2,3-dimethylbenzene-1,4-diol + S-adenosyl-L-homocysteine + H(+). It participates in cofactor biosynthesis; tocopherol biosynthesis. Its function is as follows. Involved in a key methylation step in both tocopherols (vitamin E) and plastoquinone synthesis. Catalyzes the conversion of 2-methyl-6-phytyl-1,4-hydroquinone (MPBQ) to 2,3-dimethyl-6-phytyl-1,4-hydroquinone (DMPQ, a substrate for tocopherol cyclase), and 2-methyl-6-solanyl-1,4-benzoquinone (MSBQ) to plastoquinone. The polypeptide is 2-methyl-6-phytyl-1,4-hydroquinone methyltransferase 2, chloroplastic (Oryza sativa subsp. japonica (Rice)).